The primary structure comprises 161 residues: FAD synthase (161 aa).

Residues 19–20 (TF), 24–27 (HPGH), D106, and Y133 each bind ATP.

It belongs to the archaeal FAD synthase family. In terms of assembly, homodimer. The cofactor is a divalent metal cation.

The enzyme catalyses FMN + ATP + H(+) = FAD + diphosphate. It functions in the pathway cofactor biosynthesis; FAD biosynthesis; FAD from FMN: step 1/1. Its function is as follows. Catalyzes the transfer of the AMP portion of ATP to flavin mononucleotide (FMN) to produce flavin adenine dinucleotide (FAD) coenzyme. The polypeptide is FAD synthase (Methanothermobacter marburgensis (strain ATCC BAA-927 / DSM 2133 / JCM 14651 / NBRC 100331 / OCM 82 / Marburg) (Methanobacterium thermoautotrophicum)).